The sequence spans 416 residues: D-amino acid dehydrogenase (416 aa).

Residue 3–17 (VVILGAGVIGVTSAW) participates in FAD binding.

The protein belongs to the DadA oxidoreductase family. FAD is required as a cofactor.

It carries out the reaction a D-alpha-amino acid + A + H2O = a 2-oxocarboxylate + AH2 + NH4(+). It functions in the pathway amino-acid degradation; D-alanine degradation; NH(3) and pyruvate from D-alanine: step 1/1. Functionally, oxidative deamination of D-amino acids. This is D-amino acid dehydrogenase from Rhizorhabdus wittichii (strain DSM 6014 / CCUG 31198 / JCM 15750 / NBRC 105917 / EY 4224 / RW1) (Sphingomonas wittichii).